A 161-amino-acid polypeptide reads, in one-letter code: DNA-directed RNA polymerase 18 kDa subunit (161 aa).

It belongs to the poxviridae DNA-directed RNA polymerase 18 kDa subunit family. The DNA-dependent RNA polymerase used for intermediate and late genes expression consists of eight subunits Rpo30/OPG66, Rpo7/OPG90, Rpo22/OPG103, Rpo147/OPG105, Rpo18/OPG119, Rpo19/OPG131, Rpo132/OPG151 and Rpo35/OPG156. The same holoenzyme, with the addition of the transcription-specificity factor OPG109, is used for early gene expression.

The protein localises to the virion. It carries out the reaction RNA(n) + a ribonucleoside 5'-triphosphate = RNA(n+1) + diphosphate. Its function is as follows. Part of the DNA-dependent RNA polymerase which catalyzes the transcription of viral DNA into RNA using the four ribonucleoside triphosphates as substrates. Responsible for the transcription of early, intermediate and late genes. DNA-dependent RNA polymerase associates with the early transcription factor (ETF), itself composed of OPG118 and OPG133, thereby allowing the early genes transcription. Late transcription, and probably also intermediate transcription, require newly synthesized RNA polymerase. This chain is DNA-directed RNA polymerase 18 kDa subunit (OPG119), found in Vaccinia virus (strain Copenhagen) (VACV).